We begin with the raw amino-acid sequence, 319 residues long: HTH-type transcriptional regulator YidZ (319 aa).

One can recognise an HTH lysR-type domain in the interval 8–65; that stretch reads LDLNLLLCLQLLMQERSVTKAAKRMNVTPSAVSKSLAKLRAWFDDPLFVNTPLGLAPT. A DNA-binding region (H-T-H motif) is located at residues 25 to 44; the sequence is VTKAAKRMNVTPSAVSKSLA.

This sequence belongs to the LysR transcriptional regulatory family.

Functionally, involved in anaerobic NO protection. This Salmonella agona (strain SL483) protein is HTH-type transcriptional regulator YidZ.